The following is a 424-amino-acid chain: D-inositol 3-phosphate glycosyltransferase (424 aa).

Histidine 9 provides a ligand contact to 1D-myo-inositol 3-phosphate. UDP-N-acetyl-alpha-D-glucosamine is bound by residues 15–16 and glycine 23; that span reads QP. Residues 20 to 25, lysine 78, tyrosine 110, threonine 134, and arginine 154 contribute to the 1D-myo-inositol 3-phosphate site; that span reads DSGGMN. UDP-N-acetyl-alpha-D-glucosamine contacts are provided by arginine 231, lysine 236, and arginine 294. Mg(2+) is bound by residues tyrosine 303, arginine 304, and alanine 306. Residues glutamate 316 and glutamate 324 each coordinate UDP-N-acetyl-alpha-D-glucosamine. Position 330 (threonine 330) interacts with Mg(2+).

Belongs to the glycosyltransferase group 1 family. MshA subfamily. Homodimer.

It carries out the reaction 1D-myo-inositol 3-phosphate + UDP-N-acetyl-alpha-D-glucosamine = 1D-myo-inositol 2-acetamido-2-deoxy-alpha-D-glucopyranoside 3-phosphate + UDP + H(+). Catalyzes the transfer of a N-acetyl-glucosamine moiety to 1D-myo-inositol 3-phosphate to produce 1D-myo-inositol 2-acetamido-2-deoxy-glucopyranoside 3-phosphate in the mycothiol biosynthesis pathway. This is D-inositol 3-phosphate glycosyltransferase from Corynebacterium efficiens (strain DSM 44549 / YS-314 / AJ 12310 / JCM 11189 / NBRC 100395).